Consider the following 503-residue polypeptide: MSPESGHETISGTSDFVVVANRLPVDLERLPDGTTRWKRSPGGLVTALEPLLRKRRGSWIGWAGVADSDEEPIVQDGLQLHPVRLSADDVAKYYEGFSNATLWPLYHDLIVKPEYHREWWDRYVEVNRRFAEATARAAAEGATVWIQDYQLQLVPKMLRMLRPDVTIGFFLHIPFPPVELFMQMPWRTEIVEGLLGADLVGFHLPGGAQNFLVLSRRLVGANTSRASIGVRSRFGEVQVGFRTVKVGAFPISIDSAELDGKARNRAIRQRARQIRAELGNPRKIMLGVDRLDYTKGIDVRLRALSELLEEKRIKRDDTVLVQLATPSRERVESYIAMREDIERQVGHINGEYGEVGHPIVHYLHRPIPRDELIAFFVAADVMLVTPLRDGMNLVAKEYVACRSDLGGALVLSEFTGAAAELRQAYLVNPHDLEGVKDKIEAAVNQNPEEGKRRMRALRRQVLAHDVDRWARSFLDALAATGETGDSGVTGESTPAPESDSGSF.

Arginine 22 contributes to the D-glucose 6-phosphate binding site. Position 42-43 (42-43 (GG)) interacts with UDP-alpha-D-glucose. Residues tyrosine 94 and aspartate 148 each contribute to the D-glucose 6-phosphate site. UDP-alpha-D-glucose-binding residues include arginine 290 and lysine 295. D-glucose 6-phosphate is bound at residue arginine 328. Residue 393-397 (LVAKE) participates in UDP-alpha-D-glucose binding. The interval 481 to 503 (GETGDSGVTGESTPAPESDSGSF) is disordered.

Belongs to the glycosyltransferase 20 family. As to quaternary structure, homotetramer.

It catalyses the reaction ADP-alpha-D-glucose + D-glucose 6-phosphate = alpha,alpha-trehalose 6-phosphate + ADP + H(+). The enzyme catalyses CDP-alpha-D-glucose + D-glucose 6-phosphate = alpha,alpha-trehalose 6-phosphate + CDP + H(+). The catalysed reaction is GDP-alpha-D-glucose + D-glucose 6-phosphate = alpha,alpha-trehalose 6-phosphate + GDP + H(+). It carries out the reaction TDP-alpha-D-glucose + D-glucose 6-phosphate = 5-methyl-UDP + alpha,alpha-trehalose 6-phosphate + H(+). It catalyses the reaction D-glucose 6-phosphate + UDP-alpha-D-glucose = alpha,alpha-trehalose 6-phosphate + UDP + H(+). It participates in glycan biosynthesis; trehalose biosynthesis. With respect to regulation, stimulated by the polynucleotide FII (physiological activator), and by chondroitin sulfate (CS) and heparin. Activation by the polyanion is inhibited by high salt concentration as well as by high concentrations of mononucleoside phosphates. Functionally, involved in the production of glycogen and alpha-glucan via the TreS-Pep2 branch involved in the biosynthesis of maltose-1-phosphate (M1P), and probably in the osmoprotection via the biosynthesis of trehalose. Catalyzes the transfer of glucose from UDP-glucose (UDP-Glc) to glucose-6-phosphate (Glc-6-P) to form trehalose-6-phosphate. ADP-Glc, CDP-Glc, GDP-Glc and TDP-Glc are also glucosyl donors, however, when the pyrimidine sugar nucleotides (CDP-Glc, TDP-Glc and UDP-Glc) are used as substrates, there is an absolute requirement for a high molecular weight polyanion for activity. In Mycolicibacterium smegmatis (strain ATCC 700084 / mc(2)155) (Mycobacterium smegmatis), this protein is Trehalose-6-phosphate synthase.